A 103-amino-acid polypeptide reads, in one-letter code: Large ribosomal subunit protein bL21 (103 aa).

Belongs to the bacterial ribosomal protein bL21 family. In terms of assembly, part of the 50S ribosomal subunit. Contacts protein L20.

In terms of biological role, this protein binds to 23S rRNA in the presence of protein L20. This is Large ribosomal subunit protein bL21 from Leptothrix cholodnii (strain ATCC 51168 / LMG 8142 / SP-6) (Leptothrix discophora (strain SP-6)).